A 131-amino-acid chain; its full sequence is Chromatin accessibility complex protein 1 (131 aa).

At Ala-2 the chain carries N-acetylalanine. Positions 100–124 (ASKYLKMLKEEKREEDEENDNDNES) form a coiled coil. Lys-102 is subject to N6-acetyllysine. The tract at residues 109–131 (EEKREEDEENDNDNESDHDEADS) is disordered. The span at 112–131 (REEDEENDNDNESDHDEADS) shows a compositional bias: acidic residues. At Ser-124 the chain carries Phosphoserine.

Heterodimer with POLE3; binds to DNA. Component of the CHRAC ISWI chromatin remodeling complex at least composed of SMARCA5/SNF2H, BAZ1A/ACF1, CHRAC1 and POLE3; the complex preferentially binds DNA through the CHRAC1-POLE3 heterodimer and possesses ATP-dependent nucleosome-remodeling activity. Within the complex, the heterodimer with POLE3 interacts with SMARCA5/SNF2H; the interaction is direct and enhances nucleosome sliding activity by the SMARCA5/SNF2H and BAZ1A/ACF1 interaction. Within the complex, the heterodimer with POLE3 interacts with BAZ1A/ACF1; the interactions are direct. Expressed in heart, brain, placenta, lung, liver, skeletal muscle, kidney and pancreas.

It localises to the nucleus. Forms a complex with DNA polymerase epsilon subunit POLE3 and binds naked DNA, which is then incorporated into chromatin, aided by the nucleosome remodeling activity of ISWI/SNF2H and ACF1. Does not enhance nucleosome sliding activity of the ACF-5 ISWI chromatin remodeling complex. In Homo sapiens (Human), this protein is Chromatin accessibility complex protein 1 (CHRAC1).